The chain runs to 308 residues: Glutaminase (308 aa).

Substrate is bound by residues serine 66, asparagine 117, glutamate 162, asparagine 169, tyrosine 193, tyrosine 244, and valine 262.

The protein belongs to the glutaminase family. In terms of assembly, homotetramer.

The enzyme catalyses L-glutamine + H2O = L-glutamate + NH4(+). This chain is Glutaminase, found in Natranaerobius thermophilus (strain ATCC BAA-1301 / DSM 18059 / JW/NM-WN-LF).